Reading from the N-terminus, the 1399-residue chain is DNA-directed RNA polymerase subunit beta' (1399 aa).

Positions 70, 72, 85, and 88 each coordinate Zn(2+). Positions 460, 462, and 464 each coordinate Mg(2+). Zn(2+) is bound by residues cysteine 814, cysteine 888, cysteine 895, and cysteine 898.

This sequence belongs to the RNA polymerase beta' chain family. As to quaternary structure, the RNAP catalytic core consists of 2 alpha, 1 beta, 1 beta' and 1 omega subunit. When a sigma factor is associated with the core the holoenzyme is formed, which can initiate transcription. Mg(2+) serves as cofactor. It depends on Zn(2+) as a cofactor.

It catalyses the reaction RNA(n) + a ribonucleoside 5'-triphosphate = RNA(n+1) + diphosphate. Functionally, DNA-dependent RNA polymerase catalyzes the transcription of DNA into RNA using the four ribonucleoside triphosphates as substrates. The protein is DNA-directed RNA polymerase subunit beta' of Pseudomonas syringae pv. syringae (strain B728a).